A 342-amino-acid chain; its full sequence is S-methyl-5'-thioadenosine phosphorylase (342 aa).

Phosphate is bound by residues threonine 51, arginine 99–histidine 100, and serine 132–alanine 133. Substrate is bound at residue methionine 234. Residue serine 235 participates in phosphate binding. Residue aspartate 258 to aspartate 260 participates in substrate binding.

It belongs to the PNP/MTAP phosphorylase family. MTAP subfamily. As to quaternary structure, homotrimer.

It is found in the cytoplasm. It localises to the nucleus. It carries out the reaction S-methyl-5'-thioadenosine + phosphate = 5-(methylsulfanyl)-alpha-D-ribose 1-phosphate + adenine. It functions in the pathway amino-acid biosynthesis; L-methionine biosynthesis via salvage pathway; S-methyl-5-thio-alpha-D-ribose 1-phosphate from S-methyl-5'-thioadenosine (phosphorylase route): step 1/1. Its function is as follows. Catalyzes the reversible phosphorylation of S-methyl-5'-thioadenosine (MTA) to adenine and 5-methylthioribose-1-phosphate. Involved in the breakdown of MTA, a major by-product of polyamine biosynthesis. Responsible for the first step in the methionine salvage pathway after MTA has been generated from S-adenosylmethionine. Has broad substrate specificity with 6-aminopurine nucleosides as preferred substrates. The sequence is that of S-methyl-5'-thioadenosine phosphorylase from Aspergillus fumigatus (strain ATCC MYA-4609 / CBS 101355 / FGSC A1100 / Af293) (Neosartorya fumigata).